Reading from the N-terminus, the 92-residue chain is MKTLLLTLVVVTIVCLDLGDSLSCYLGYKRSQTCPPGEKVCFVKSWCDAFCGSRGKRIEMGCAATCPTVKDGIDITCCATDNCNTYANWGSG.

Positions 1 to 21 are cleaved as a signal peptide; that stretch reads MKTLLLTLVVVTIVCLDLGDS. Disulfide bonds link cysteine 24-cysteine 41, cysteine 34-cysteine 62, cysteine 47-cysteine 51, cysteine 66-cysteine 77, and cysteine 78-cysteine 83.

Belongs to the three-finger toxin family. Long-chain subfamily. Type II alpha-neurotoxin sub-subfamily. In terms of tissue distribution, expressed by the venom gland.

The protein localises to the secreted. In terms of biological role, binds with high affinity to muscular (alpha-1/CHRNA1) and neuronal (alpha-7/CHRNA7) nicotinic acetylcholine receptor (nAChR) and inhibits acetylcholine from binding to the receptor, thereby impairing neuromuscular and neuronal transmission. The polypeptide is Alpha-elapitoxin-Lh2a (Hydrophis hardwickii (Hardwick's spine-bellied seasnake)).